Consider the following 211-residue polypeptide: Uridine kinase (211 aa).

Residue 12–19 participates in ATP binding; sequence GGSGSGKT.

Belongs to the uridine kinase family.

It localises to the cytoplasm. It catalyses the reaction uridine + ATP = UMP + ADP + H(+). The enzyme catalyses cytidine + ATP = CMP + ADP + H(+). It participates in pyrimidine metabolism; CTP biosynthesis via salvage pathway; CTP from cytidine: step 1/3. The protein operates within pyrimidine metabolism; UMP biosynthesis via salvage pathway; UMP from uridine: step 1/1. The protein is Uridine kinase of Geobacillus sp. (strain WCH70).